The primary structure comprises 496 residues: Glutamate--tRNA ligase 2 (496 aa).

The 'HIGH' region signature appears at 13–23 (PSPTGRLHVGG). A 'KMSKS' region motif is present at residues 255-259 (KLSKR). Position 258 (Lys258) interacts with ATP.

It belongs to the class-I aminoacyl-tRNA synthetase family. Glutamate--tRNA ligase type 1 subfamily. Monomer.

It localises to the cytoplasm. It catalyses the reaction tRNA(Glu) + L-glutamate + ATP = L-glutamyl-tRNA(Glu) + AMP + diphosphate. Functionally, catalyzes the attachment of glutamate to tRNA(Glu) in a two-step reaction: glutamate is first activated by ATP to form Glu-AMP and then transferred to the acceptor end of tRNA(Glu). This Rubrobacter xylanophilus (strain DSM 9941 / JCM 11954 / NBRC 16129 / PRD-1) protein is Glutamate--tRNA ligase 2.